The primary structure comprises 200 residues: GMP synthase [glutamine-hydrolyzing] subunit A (200 aa).

The Glutamine amidotransferase type-1 domain maps to 3–193 (KIYVVDNGGQ…IGICASYREI (191 aa)). C80 acts as the Nucleophile in catalysis. Active-site residues include H167 and E169.

As to quaternary structure, heterodimer composed of a glutamine amidotransferase subunit (A) and a GMP-binding subunit (B).

The enzyme catalyses XMP + L-glutamine + ATP + H2O = GMP + L-glutamate + AMP + diphosphate + 2 H(+). Its pathway is purine metabolism; GMP biosynthesis; GMP from XMP (L-Gln route): step 1/1. In terms of biological role, catalyzes the synthesis of GMP from XMP. This chain is GMP synthase [glutamine-hydrolyzing] subunit A, found in Thermoplasma acidophilum (strain ATCC 25905 / DSM 1728 / JCM 9062 / NBRC 15155 / AMRC-C165).